The following is a 154-amino-acid chain: Probable transcription factor At4g00232 (154 aa).

The interval M1–M44 is disordered.

Belongs to the GeBP family.

This is Probable transcription factor At4g00232 from Arabidopsis thaliana (Mouse-ear cress).